A 1096-amino-acid chain; its full sequence is Centrosome-associated zinc finger protein Cp190 (1096 aa).

The involved in microtubule and centrosome binding stretch occupies residues 1–209 (MGEVKSVKVD…GDSSNVKQEP (209 aa)). Residues 30–97 (CDLTLQFRDN…MYTGTLEFEL (68 aa)) enclose the BTB domain. Residues 126–308 (MENVNRQQRP…PQGTQTQLEH (183 aa)) are disordered. Composition is skewed to polar residues over residues 175–213 (RANTQRGSTGNTMSRTSGGSNRSPYGDSSNVKQEPTSPF) and 220–230 (YNNNKRPAQTS). Phosphoserine is present on residues Ser197 and Ser211. Residues 207–271 (QEPTSPFEQL…GDNDPEYDGG (65 aa)) form a nuclear localization region. The interval 210–245 (TSPFEQLRKGYNNNKRPAQTSLLSPPSKKPSLEEVK) is involved in interaction with cliff. Phosphothreonine is present on Thr229. A Phosphoserine modification is found at Ser233. Residues 239–252 (PSLEEVKEFAEQQR) show a composition bias toward basic and acidic residues. Positions 245-468 (KEFAEQQRMR…IAQGAENTTG (224 aa)) are centrosomal targeting M domain involved in interaction with ZIPIC. Residues 292 to 305 (STSKQQSPQGTQTQ) show a composition bias toward low complexity. Phosphoserine occurs at positions 298 and 319. The segment at 309–390 (GSTTIILKQD…KPPANQSSAT (82 aa)) is involved in interaction with cliff. The segment at 366–449 (NTPAAPTEKS…ANTAAAQKRR (84 aa)) is disordered. The segment at 385-508 (NQSSATTSPH…KETIDPALCE (124 aa)) is centrosomal localization and interaction with microtubules. The span at 412-445 (AQQKAASSQQKSGTSQTTGNQGTGANPPANTAAA) shows a compositional bias: low complexity. C2H2-type zinc fingers lie at residues 538 to 561 (AECALCNQSYRTKGELEAHINEVH) and 567 to 590 (QQCIYCNKVFEQELQLYRHMKSYH). Thr603 is subject to Phosphothreonine. A compositionally biased stretch (acidic residues) spans 608-625 (LGSQDEEEEAEGDEEQEP). Residues 608-630 (LGSQDEEEEAEGDEEQEPEQTGK) are disordered. Residues Ser610, Ser708, and Ser723 each carry the phosphoserine modification. Positions 710 to 733 (PEAEHVKQETDEKSLAGTEEEYDD) are disordered. The segment covering 711-723 (EAEHVKQETDEKS) has biased composition (basic and acidic residues). Thr727 is subject to Phosphothreonine. Ser745, Ser748, Ser757, and Ser760 each carry phosphoserine. The disordered stretch occupies residues 770–927 (LIAESEEQSN…EDSPIPHSDS (158 aa)). Over residues 777-799 (QSNKEPKSDKPRDDISEKLKELT) the composition is skewed to basic and acidic residues. Acidic residues predominate over residues 802–812 (WTEDENDDDVD). At Thr817 the chain carries Phosphothreonine. 4 stretches are compositionally biased toward basic and acidic residues: residues 825 to 834 (ANKDPEPTVH), 849 to 861 (KGPEEATEEKASE), 882 to 907 (EKMDVDSEAADEKASKAEVQIKKEAE), and 914 to 927 (EFIKEDSPIPHSDS). Phosphoserine is present on residues Ser920, Ser925, and Ser927. Thr936 is modified (phosphothreonine). Ser938 is subject to Phosphoserine. Composition is skewed to basic and acidic residues over residues 960–973 (IAEAEKPDQEKDIV) and 1011–1035 (AAEKAAENNEDTRTADEKEAVEDKP). The disordered stretch occupies residues 960–1096 (IAEAEKPDQE…GVSAAAKEEL (137 aa)). Ser1071 and Ser1074 each carry phosphoserine. The segment covering 1076-1086 (WGDDDEDEDEN) has biased composition (acidic residues).

In terms of assembly, homodimerizes via the N-terminal BTB domain. Component of the gypsy chromatin insulator complex, composed of Cp190, mod(mdg4) and su(Hw). The gypsy chromatin insulator complex interacts with Topors via mod(mdg4) and su(Hw). Interacts with Cp60. Interacts with inv. Interacts with Nup98. Interacts (via BTB domain) with pita (via region between the ZAD domain and the first zinc finger domain); the interaction is direct. Interacts with ZIPIC (via region between the ZAD domain and the first zinc finger domain); the interaction is direct. Interacts (via regions between the BTB domain and first zinc finger domain) with cliff (via regions flanking MADF domain 1); the interaction is probably direct. Associates (via N-terminus) with microtubules; the interaction is direct, is enhanced by dimerization and involves multiple regions within the N-terminus. Microtubule association is enriched at growing plus ends. As to expression, expressed in spermatids but not in mature spermatozoa. Localizes within the spermatids to a sheath of microtubules around the nucleus and to microtubules within the tail.

Its subcellular location is the nucleus. It localises to the cytoplasm. The protein localises to the cytoskeleton. It is found in the microtubule organizing center. The protein resides in the centrosome. Its subcellular location is the chromosome. It localises to the nucleoplasm. In terms of biological role, plays a central role in chromatin domain organization and boundary function through recruitment by a range of insulator DNA-binding proteins, including ZIPIC, pita, CTCF, su(Hw), cliff and others. Together with pita and CTCF cooperatively binds to and regulates the activity of the Miscadastral pigmentation (MCP) insulator. Cooperatively recruited to the front-ultraabdominal (Fub) boundary by pita, su(Hw) and cliff. Recruitment of Cp190 together with Chro/chromator induces chromatin decondensation. Component of the gypsy chromatin insulator complex which is required for the function of the gypsy chromatin insulator and other endogenous chromatin insulators. Chromatin insulators are regulatory elements that establish independent domains of transcriptional activity within eukaryotic genomes. Insulators have two defining properties; they can block the communication between an enhancer and a promoter when placed between them and can also buffer transgenes from position effect variegation (PEV). Insulators are proposed to structure the chromatin fiber into independent domains of differing transcriptional potential by promoting the formation of distinct chromatin loops to form topologically associating domains (TADs). This chromatin looping may involve the formation of insulator bodies, where homotypic interactions between individual subunits of the insulator complex could promote the clustering of widely spaced insulators at the nuclear periphery. Within the gypsy insulator complex, this protein may directly bind to insulator DNA at sites distinct from those recognized by su(Hw). Required during embryogenesis for axial expansion, an actin/myosin dependent process that distributes the dividing nuclei along the anterior-posterior axis of the syncytial embryo. Associates with centrosomes and interphase microtubules during mitosis, and recruits CP60; may have a role in maintaining centrosome and spindle integrity. The protein is Centrosome-associated zinc finger protein Cp190 of Drosophila melanogaster (Fruit fly).